A 90-amino-acid chain; its full sequence is Defensin-like protein 178 (90 aa).

The N-terminal stretch at 1–23 (MAKATSSLVVPIIFLVIFALVEQ) is a signal peptide. Intrachain disulfides connect Cys-27/Cys-66, Cys-36/Cys-55, Cys-39/Cys-60, and Cys-43/Cys-62.

This sequence belongs to the DEFL family.

The protein resides in the secreted. This Arabidopsis thaliana (Mouse-ear cress) protein is Defensin-like protein 178 (LCR64).